The chain runs to 490 residues: Cytochrome P450 2C14 (490 aa).

A heme-binding site is contributed by Cys435.

The protein belongs to the cytochrome P450 family. Heme is required as a cofactor.

It is found in the endoplasmic reticulum membrane. Its subcellular location is the microsome membrane. The catalysed reaction is an organic molecule + reduced [NADPH--hemoprotein reductase] + O2 = an alcohol + oxidized [NADPH--hemoprotein reductase] + H2O + H(+). In terms of biological role, cytochromes P450 are a group of heme-thiolate monooxygenases. In liver microsomes, this enzyme is involved in an NADPH-dependent electron transport pathway. It oxidizes a variety of structurally unrelated compounds, including steroids, fatty acids, and xenobiotics. The chain is Cytochrome P450 2C14 (CYP2C14) from Oryctolagus cuniculus (Rabbit).